The primary structure comprises 611 residues: Actin-binding LIM protein 2 (611 aa).

4 consecutive LIM zinc-binding domains span residues I22–T81, T81–G141, R151–I210, and I210–E270. Zn(2+)-binding residues include C83, C86, H103, C106, C109, C112, C131, and C134. Zn(2+) contacts are provided by C212, C215, H232, C235, C238, C241, H260, and C263. Basic and acidic residues predominate over residues T269–T278. Disordered regions lie at residues T269–P295 and Y336–N527. Low complexity-rich tracts occupy residues S279–P295 and S363–S372. Phosphoserine occurs at positions 282, 294, 364, and 367. Residues S393–S404 are compositionally biased toward polar residues. Residue S452 is modified to Phosphoserine. Phosphothreonine is present on T472. Residues R473–S488 show a composition bias toward polar residues. A phosphoserine mark is found at S476 and S578. In terms of domain architecture, HP spans M543 to F611.

In terms of assembly, interacts with F-actin and ABRA. As to expression, highly expressed in skeletal muscle.

It localises to the cytoplasm. Its function is as follows. May act as scaffold protein. May stimulate ABRA activity and ABRA-dependent SRF transcriptional activity. In Homo sapiens (Human), this protein is Actin-binding LIM protein 2 (ABLIM2).